Consider the following 391-residue polypeptide: Argininosuccinate synthase (391 aa).

Residue 6–14 (AYSGGLDTT) coordinates ATP. Y84 serves as a coordination point for L-citrulline. G114 provides a ligand contact to ATP. L-aspartate is bound by residues T116, N120, and D121. Residue N120 coordinates L-citrulline. L-citrulline is bound by residues R124, S171, S180, E253, and Y265.

The protein belongs to the argininosuccinate synthase family. Type 1 subfamily. In terms of assembly, homotetramer.

The protein resides in the cytoplasm. It carries out the reaction L-citrulline + L-aspartate + ATP = 2-(N(omega)-L-arginino)succinate + AMP + diphosphate + H(+). It functions in the pathway amino-acid biosynthesis; L-arginine biosynthesis; L-arginine from L-ornithine and carbamoyl phosphate: step 2/3. In Saccharolobus solfataricus (strain ATCC 35092 / DSM 1617 / JCM 11322 / P2) (Sulfolobus solfataricus), this protein is Argininosuccinate synthase.